Reading from the N-terminus, the 591-residue chain is NADP-dependent malic enzyme (591 aa).

Basic and acidic residues predominate over residues 1 to 10; the sequence is MESTLKEMRD. The tract at residues 1-26 is disordered; it reads MESTLKEMRDGASVLDMDPKSTVGGG. The active-site Proton donor is Tyr139. Position 192 (Arg192) interacts with NAD(+). Lys210 acts as the Proton acceptor in catalysis. Residues Glu282, Asp283, and Asp306 each coordinate a divalent metal cation. Asp306 is an NAD(+) binding site. 335–351 is an NADP(+) binding site; that stretch reads LFLGAGEAGTGIAELIA. Residue Asn447 participates in NAD(+) binding.

It belongs to the malic enzymes family. As to quaternary structure, homotetramer. Mg(2+) serves as cofactor. It depends on Mn(2+) as a cofactor. As to expression, mRNA found twofold higher in leaves and stems than in roots.

It is found in the cytoplasm. It catalyses the reaction (S)-malate + NADP(+) = pyruvate + CO2 + NADPH. The catalysed reaction is oxaloacetate + H(+) = pyruvate + CO2. The protein is NADP-dependent malic enzyme of Populus trichocarpa (Western balsam poplar).